Here is a 429-residue protein sequence, read N- to C-terminus: Ribosomal RNA small subunit methyltransferase B (429 aa).

S-adenosyl-L-methionine is bound by residues 254–260, aspartate 277, aspartate 303, and aspartate 322; that span reads CAAPGGK. Cysteine 375 acts as the Nucleophile in catalysis.

Belongs to the class I-like SAM-binding methyltransferase superfamily. RsmB/NOP family.

It localises to the cytoplasm. It catalyses the reaction cytidine(967) in 16S rRNA + S-adenosyl-L-methionine = 5-methylcytidine(967) in 16S rRNA + S-adenosyl-L-homocysteine + H(+). Its function is as follows. Specifically methylates the cytosine at position 967 (m5C967) of 16S rRNA. The sequence is that of Ribosomal RNA small subunit methyltransferase B from Cronobacter sakazakii (strain ATCC BAA-894) (Enterobacter sakazakii).